A 571-amino-acid chain; its full sequence is Medium/long-chain-fatty-acid--CoA ligase FadD8 (571 aa).

The segment at 1 to 22 (MSTAGDDAVGVPPACGGRSDAV) is disordered.

Belongs to the ATP-dependent AMP-binding enzyme family.

The enzyme catalyses a medium-chain fatty acid + ATP + CoA = a medium-chain fatty acyl-CoA + AMP + diphosphate. It carries out the reaction a long-chain fatty acid + ATP + CoA = a long-chain fatty acyl-CoA + AMP + diphosphate. The catalysed reaction is hexanoate + ATP + CoA = hexanoyl-CoA + AMP + diphosphate. It catalyses the reaction dodecanoate + ATP + CoA = dodecanoyl-CoA + AMP + diphosphate. The enzyme catalyses hexadecanoate + ATP + CoA = hexadecanoyl-CoA + AMP + diphosphate. It functions in the pathway lipid metabolism; fatty acid metabolism. In terms of biological role, catalyzes the activation of medium/long-chain fatty acids as acyl-coenzyme A (acyl-CoA). This chain is Medium/long-chain-fatty-acid--CoA ligase FadD8, found in Mycobacterium tuberculosis (strain ATCC 25618 / H37Rv).